A 195-amino-acid polypeptide reads, in one-letter code: Imidazoleglycerol-phosphate dehydratase (195 aa).

This sequence belongs to the imidazoleglycerol-phosphate dehydratase family.

Its subcellular location is the cytoplasm. The enzyme catalyses D-erythro-1-(imidazol-4-yl)glycerol 3-phosphate = 3-(imidazol-4-yl)-2-oxopropyl phosphate + H2O. It participates in amino-acid biosynthesis; L-histidine biosynthesis; L-histidine from 5-phospho-alpha-D-ribose 1-diphosphate: step 6/9. The sequence is that of Imidazoleglycerol-phosphate dehydratase from Dechloromonas aromatica (strain RCB).